A 223-amino-acid polypeptide reads, in one-letter code: Octanoyltransferase (223 aa).

A BPL/LPL catalytic domain is found at 32-207 (DETPDEIWLV…HFAHHLAITD (176 aa)). Substrate is bound by residues 71–78 (RGGQVTYH), 138–140 (SLG), and 151–153 (GLA). Cys-169 functions as the Acyl-thioester intermediate in the catalytic mechanism.

This sequence belongs to the LipB family.

The protein localises to the cytoplasm. It carries out the reaction octanoyl-[ACP] + L-lysyl-[protein] = N(6)-octanoyl-L-lysyl-[protein] + holo-[ACP] + H(+). It participates in protein modification; protein lipoylation via endogenous pathway; protein N(6)-(lipoyl)lysine from octanoyl-[acyl-carrier-protein]: step 1/2. In terms of biological role, catalyzes the transfer of endogenously produced octanoic acid from octanoyl-acyl-carrier-protein onto the lipoyl domains of lipoate-dependent enzymes. Lipoyl-ACP can also act as a substrate although octanoyl-ACP is likely to be the physiological substrate. The sequence is that of Octanoyltransferase from Erwinia tasmaniensis (strain DSM 17950 / CFBP 7177 / CIP 109463 / NCPPB 4357 / Et1/99).